Here is a 213-residue protein sequence, read N- to C-terminus: Ribosomal RNA large subunit methyltransferase E (213 aa).

Residues glycine 59, phenylalanine 61, aspartate 79, aspartate 97, and aspartate 121 each coordinate S-adenosyl-L-methionine. Lysine 161 acts as the Proton acceptor in catalysis.

Belongs to the class I-like SAM-binding methyltransferase superfamily. RNA methyltransferase RlmE family.

The protein resides in the cytoplasm. It catalyses the reaction uridine(2552) in 23S rRNA + S-adenosyl-L-methionine = 2'-O-methyluridine(2552) in 23S rRNA + S-adenosyl-L-homocysteine + H(+). Its function is as follows. Specifically methylates the uridine in position 2552 of 23S rRNA at the 2'-O position of the ribose in the fully assembled 50S ribosomal subunit. The protein is Ribosomal RNA large subunit methyltransferase E of Myxococcus xanthus (strain DK1622).